Reading from the N-terminus, the 79-residue chain is Cyclin-dependent kinases regulatory subunit 2 (79 aa).

Residue K4 is modified to N6-acetyllysine.

Belongs to the CKS family. In terms of assembly, forms a homohexamer that can probably bind six kinase subunits.

Functionally, binds to the catalytic subunit of the cyclin dependent kinases and is essential for their biological function. This Mus musculus (Mouse) protein is Cyclin-dependent kinases regulatory subunit 2 (Cks2).